Consider the following 325-residue polypeptide: Tetraacyldisaccharide 4'-kinase (325 aa).

55 to 62 (TAGGNGKT) provides a ligand contact to ATP.

It belongs to the LpxK family.

The enzyme catalyses a lipid A disaccharide + ATP = a lipid IVA + ADP + H(+). The protein operates within glycolipid biosynthesis; lipid IV(A) biosynthesis; lipid IV(A) from (3R)-3-hydroxytetradecanoyl-[acyl-carrier-protein] and UDP-N-acetyl-alpha-D-glucosamine: step 6/6. Its function is as follows. Transfers the gamma-phosphate of ATP to the 4'-position of a tetraacyldisaccharide 1-phosphate intermediate (termed DS-1-P) to form tetraacyldisaccharide 1,4'-bis-phosphate (lipid IVA). This chain is Tetraacyldisaccharide 4'-kinase, found in Salmonella dublin (strain CT_02021853).